Consider the following 752-residue polypeptide: Iron-sulfur clusters transporter ABCB7, mitochondrial (752 aa).

A mitochondrion-targeting transit peptide spans 1–22; that stretch reads MALLAIHSWRWAAAAVAFEKHK. Topologically, residues 23 to 140 are mitochondrial matrix; that stretch reads HSAVLTRSLV…KDRPDLRARV (118 aa). In terms of domain architecture, ABC transmembrane type-1 spans 140 to 436; that stretch reads VAISLGFLGG…LGTVYRETRQ (297 aa). The chain crosses the membrane as a helical span at residues 141-161; that stretch reads AISLGFLGGAKAMNIVVPFMF. Residues 162-185 lie on the Mitochondrial intermembrane side of the membrane; it reads KYAVDSLNQMSGNMLNLSDAPNTV. Residues 186–206 form a helical membrane-spanning segment; the sequence is ATMATAVLIGYGVSRAGAAFF. Residues 207-259 are Mitochondrial matrix-facing; that stretch reads NEVRNAVFGKVAQNSIRRIAKNVFLHLHNLDLGFHLSRQTGALSKAIDRGTRG. An N6-acetyllysine mark is found at K216 and K251. The helical transmembrane segment at 260-280 threads the bilayer; the sequence is ISFVLSALVFNLLPIVFEMTL. Topologically, residues 281 to 290 are mitochondrial intermembrane; sequence VSSVLYYKCG. Residues 291-311 traverse the membrane as a helical segment; sequence AQFALVTLGTLGAYTAFTVAV. Over 312–382 the chain is Mitochondrial matrix; the sequence is TRWRTRFRIE…TLAMLNFGQS (71 aa). 315 to 319 lines the glutathione pocket; that stretch reads RTRFR. Phosphoserine is present on S336. Y340 is subject to Phosphotyrosine. T342 bears the Phosphothreonine mark. K350 carries the post-translational modification N6-acetyllysine. Residue 378 to 381 coordinates glutathione; it reads NFGQ. The chain crosses the membrane as a helical span at residues 383–403; it reads AIFSVGLTAIMVLASQGIVAG. At 404–409 the chain is on the mitochondrial intermembrane side; sequence ALTVGD. Residues 410-430 traverse the membrane as a helical segment; it reads LVMVNGLLFQLSLPLNFLGTV. G428 contributes to the glutathione binding site. The Mitochondrial matrix segment spans residues 431–752; that stretch reads YRETRQALID…SVKGCGNCSC (322 aa). In terms of domain architecture, ABC transporter spans 472-706; sequence VAFDNVHFEY…SSSIYSEMWH (235 aa). ATP-binding positions include Y481 and 505-516; that span reads GGSGSGKSTIVR.

This sequence belongs to the ABC transporter superfamily. ABCB family. Heavy Metal importer (TC 3.A.1.210) subfamily. In terms of assembly, homodimer or heterodimer. Interacts with C10orf88/PAAT. Forms a complex with ABCB10 and FECH, where a dimeric FECH bridges ABCB7 and ABCB10 homodimers; this complex may be required for cellular iron homeostasis, mitochondrial function and heme biosynthesis. Interacts with FECH. Interacts with ATP5F1A. Interacts with COX4I1; this interaction allows the regulation of cellular iron homeostasis and cellular reactive oxygen species (ROS) levels in cardiomyocytes.

The protein localises to the mitochondrion inner membrane. It catalyses the reaction (glutathione)4[2Fe(III)-2S] cluster(in) + ATP + H2O = (glutathione)4[2Fe(III)-2S] cluster(out) + ADP + phosphate + H(+). In terms of biological role, exports glutathione-coordinated iron-sulfur clusters such as [2Fe-2S]-(GS)4 cluster from the mitochondria to the cytosol in an ATP-dependent manner allowing the assembly of the cytosolic iron-sulfur (Fe/S) cluster-containing proteins and participates in iron homeostasis. Moreover, through a functional complex formed of ABCB7, FECH and ABCB10, also plays a role in the cellular iron homeostasis, mitochondrial function and heme biosynthesis. In cardiomyocytes, regulates cellular iron homeostasis and cellular reactive oxygen species (ROS) levels through its interaction with COX4I1. May also play a role in hematopoiesis. This chain is Iron-sulfur clusters transporter ABCB7, mitochondrial, found in Rattus norvegicus (Rat).